A 454-amino-acid polypeptide reads, in one-letter code: MKAPPPPSPVAKRARVSPFVFLLVLFLLLFSFLYGEDLKELLGSQAQARPSLHFNAAAAGDGIELPAATAATTEGRTTTRRWRGRLPFAANGDGEEEEEECDVFSGRWVRDEAARPLYREADCPYIPAQLACEAHGRPETAYQRWRWQPRGCALPAFDAAAMLDRLRGKRVMFVGDSLGRGQFTSLVCLLLAAVPDPAARSFATSPDQQRSVFTAAAYNATVEFYWAPFLLQSNADNAAVHRISDRMVRRGSIGHHGRHWEGADVIVFNTYLWWCTGLQFRILEDGPFDAGGNSSTTTWVSTEEAYAMAFREMLQWAREHMDFATTRVFFTSMSPTHGKSQDWGGGEPGGNCYGETEMIGDAAYWGSDSRRGVMRAIGEVLDGDGADVPVTFLNVTQLSLYRKDAHTSVYKKQWTPPTPEQLADPKTYADCVHWCLPGLQDTWNELLYTKLFYP.

The Cytoplasmic portion of the chain corresponds to 1 to 15 (MKAPPPPSPVAKRAR). A helical; Signal-anchor for type II membrane protein membrane pass occupies residues 16–36 (VSPFVFLLVLFLLLFSFLYGE). Topologically, residues 37–454 (DLKELLGSQA…ELLYTKLFYP (418 aa)) are lumenal. 4 disulfides stabilise this stretch: Cys101/Cys152, Cys123/Cys188, Cys132/Cys435, and Cys352/Cys431. The GDS motif motif lies at 175–177 (GDS). Ser177 acts as the Nucleophile in catalysis. N-linked (GlcNAc...) asparagine glycans are attached at residues Asn219, Asn293, and Asn394. The Proton donor role is filled by Asp430. Positions 430–433 (DCVH) match the DXXH motif motif. The active-site Proton acceptor is the His433.

This sequence belongs to the PC-esterase family. TBL subfamily.

It is found in the golgi apparatus membrane. In terms of biological role, probable xylan acetyltransferase required for 2-O- and 3-O-monoacetylation of xylosyl residues in xylan. Possesses extremely low activity in vitro. This chain is Probable xylan O-acetyltransferase 9, found in Oryza sativa subsp. japonica (Rice).